The following is a 407-amino-acid chain: Methylthioribose kinase (407 aa).

ATP-binding positions include Asn40, Lys57, and 111–113 (EDL). Residue Asp229 participates in substrate binding. 246 to 248 (DAE) contacts ATP. A substrate-binding site is contributed by Arg344.

It belongs to the methylthioribose kinase family. In terms of assembly, homodimer.

The enzyme catalyses 5-(methylsulfanyl)-D-ribose + ATP = 5-(methylsulfanyl)-alpha-D-ribose 1-phosphate + ADP + H(+). Its pathway is amino-acid biosynthesis; L-methionine biosynthesis via salvage pathway; S-methyl-5-thio-alpha-D-ribose 1-phosphate from S-methyl-5'-thioadenosine (hydrolase route): step 2/2. In terms of biological role, catalyzes the phosphorylation of methylthioribose into methylthioribose-1-phosphate. In Yersinia pseudotuberculosis serotype IB (strain PB1/+), this protein is Methylthioribose kinase.